Reading from the N-terminus, the 128-residue chain is Small ribosomal subunit protein uS11 (128 aa).

This sequence belongs to the universal ribosomal protein uS11 family. In terms of assembly, part of the 30S ribosomal subunit. Interacts with proteins S7 and S18. Binds to IF-3.

Located on the platform of the 30S subunit, it bridges several disparate RNA helices of the 16S rRNA. Forms part of the Shine-Dalgarno cleft in the 70S ribosome. This chain is Small ribosomal subunit protein uS11, found in Chloroherpeton thalassium (strain ATCC 35110 / GB-78).